A 371-amino-acid polypeptide reads, in one-letter code: tRNA-specific 2-thiouridylase MnmA (371 aa).

ATP is bound by residues 13 to 20 (GMSGGVDS) and M39. An interaction with target base in tRNA region spans residues 99–101 (NPD). C104 functions as the Nucleophile in the catalytic mechanism. C104 and C200 are oxidised to a cystine. G128 contacts ATP. Positions 150–152 (KDQ) are interaction with tRNA. C200 functions as the Cysteine persulfide intermediate in the catalytic mechanism. Residues 308 to 309 (RY) form an interaction with tRNA region.

This sequence belongs to the MnmA/TRMU family.

The protein localises to the cytoplasm. It catalyses the reaction S-sulfanyl-L-cysteinyl-[protein] + uridine(34) in tRNA + AH2 + ATP = 2-thiouridine(34) in tRNA + L-cysteinyl-[protein] + A + AMP + diphosphate + H(+). Functionally, catalyzes the 2-thiolation of uridine at the wobble position (U34) of tRNA, leading to the formation of s(2)U34. The chain is tRNA-specific 2-thiouridylase MnmA from Listeria monocytogenes serotype 4a (strain HCC23).